Consider the following 79-residue polypeptide: Sec-independent protein translocase protein TatA (79 aa).

A helical transmembrane segment spans residues 1–21; sequence MHMPSGTQWLIILLIVVLLFG.

The protein belongs to the TatA/E family. In terms of assembly, the Tat system comprises two distinct complexes: a TatABC complex, containing multiple copies of TatA, TatB and TatC subunits, and a separate TatA complex, containing only TatA subunits. Substrates initially bind to the TatABC complex, which probably triggers association of the separate TatA complex to form the active translocon.

The protein localises to the cell inner membrane. In terms of biological role, part of the twin-arginine translocation (Tat) system that transports large folded proteins containing a characteristic twin-arginine motif in their signal peptide across membranes. TatA could form the protein-conducting channel of the Tat system. The sequence is that of Sec-independent protein translocase protein TatA from Campylobacter lari (strain RM2100 / D67 / ATCC BAA-1060).